The following is a 305-amino-acid chain: Ribonuclease BN (305 aa).

Residues His-64, His-66, Asp-68, His-69, His-141, Asp-212, and His-270 each coordinate Zn(2+). Catalysis depends on Asp-68, which acts as the Proton acceptor.

It belongs to the RNase Z family. RNase BN subfamily. In terms of assembly, homodimer. The cofactor is Zn(2+).

In terms of biological role, zinc phosphodiesterase, which has both exoribonuclease and endoribonuclease activities. The chain is Ribonuclease BN from Escherichia coli O127:H6 (strain E2348/69 / EPEC).